The primary structure comprises 216 residues: MGQKTHPTGFRIGINKSHDSTWFANYGTYGEILKEDYKIRKFFENDWGTLYNKAGVSKVEIKRKVNQLELLIHAARPKAIAGTADEESTFSTLRAQIKKLTNNPKQTRIKVIQVNKMETESVLVARALAEQLEKRVAFKRAIRLVAQRLQKSGTKGFKIQVSGRLNGAEMARDEWVREGRVPLQTLRADISYATARAYTTYGVLGIKVWIFNKEII.

The 73-residue stretch at 43–115 folds into the KH type-2 domain; the sequence is FENDWGTLYN…QTRIKVIQVN (73 aa).

This sequence belongs to the universal ribosomal protein uS3 family. In terms of assembly, part of the 30S ribosomal subunit.

The protein resides in the plastid. The protein localises to the chloroplast. The polypeptide is Small ribosomal subunit protein uS3c (rps3) (Emiliania huxleyi (Coccolithophore)).